The chain runs to 228 residues: 2-hydroxy-3-keto-5-methylthiopentenyl-1-phosphate phosphatase (228 aa).

It belongs to the HAD-like hydrolase superfamily. MtnX family.

The enzyme catalyses 2-hydroxy-5-methylsulfanyl-3-oxopent-1-enyl phosphate + H2O = 1,2-dihydroxy-5-(methylsulfanyl)pent-1-en-3-one + phosphate. It functions in the pathway amino-acid biosynthesis; L-methionine biosynthesis via salvage pathway; L-methionine from S-methyl-5-thio-alpha-D-ribose 1-phosphate: step 4/6. Functionally, dephosphorylates 2-hydroxy-3-keto-5-methylthiopentenyl-1-phosphate (HK-MTPenyl-1-P) yielding 1,2-dihydroxy-3-keto-5-methylthiopentene (DHK-MTPene). This Lysinibacillus sphaericus (strain C3-41) protein is 2-hydroxy-3-keto-5-methylthiopentenyl-1-phosphate phosphatase.